We begin with the raw amino-acid sequence, 282 residues long: 4-hydroxy-3-methylbut-2-enyl diphosphate reductase (282 aa).

Cysteine 14 contacts [4Fe-4S] cluster. (2E)-4-hydroxy-3-methylbut-2-enyl diphosphate-binding residues include histidine 43 and histidine 78. Residues histidine 43 and histidine 78 each contribute to the dimethylallyl diphosphate site. 2 residues coordinate isopentenyl diphosphate: histidine 43 and histidine 78. Cysteine 100 is a [4Fe-4S] cluster binding site. Histidine 128 provides a ligand contact to (2E)-4-hydroxy-3-methylbut-2-enyl diphosphate. Histidine 128 contributes to the dimethylallyl diphosphate binding site. Histidine 128 is a binding site for isopentenyl diphosphate. Glutamate 130 serves as the catalytic Proton donor. Threonine 164 lines the (2E)-4-hydroxy-3-methylbut-2-enyl diphosphate pocket. Residue cysteine 192 participates in [4Fe-4S] cluster binding. (2E)-4-hydroxy-3-methylbut-2-enyl diphosphate is bound by residues serine 220, serine 221, asparagine 222, and serine 266. 4 residues coordinate dimethylallyl diphosphate: serine 220, serine 221, asparagine 222, and serine 266. Isopentenyl diphosphate-binding residues include serine 220, serine 221, asparagine 222, and serine 266.

The protein belongs to the IspH family. Requires [4Fe-4S] cluster as cofactor.

The enzyme catalyses isopentenyl diphosphate + 2 oxidized [2Fe-2S]-[ferredoxin] + H2O = (2E)-4-hydroxy-3-methylbut-2-enyl diphosphate + 2 reduced [2Fe-2S]-[ferredoxin] + 2 H(+). It catalyses the reaction dimethylallyl diphosphate + 2 oxidized [2Fe-2S]-[ferredoxin] + H2O = (2E)-4-hydroxy-3-methylbut-2-enyl diphosphate + 2 reduced [2Fe-2S]-[ferredoxin] + 2 H(+). Its pathway is isoprenoid biosynthesis; dimethylallyl diphosphate biosynthesis; dimethylallyl diphosphate from (2E)-4-hydroxy-3-methylbutenyl diphosphate: step 1/1. The protein operates within isoprenoid biosynthesis; isopentenyl diphosphate biosynthesis via DXP pathway; isopentenyl diphosphate from 1-deoxy-D-xylulose 5-phosphate: step 6/6. In terms of biological role, catalyzes the conversion of 1-hydroxy-2-methyl-2-(E)-butenyl 4-diphosphate (HMBPP) into a mixture of isopentenyl diphosphate (IPP) and dimethylallyl diphosphate (DMAPP). Acts in the terminal step of the DOXP/MEP pathway for isoprenoid precursor biosynthesis. This Clostridium perfringens (strain SM101 / Type A) protein is 4-hydroxy-3-methylbut-2-enyl diphosphate reductase.